Consider the following 722-residue polypeptide: Delta-like protein 1 (722 aa).

The N-terminal stretch at 1 to 17 is a signal peptide; it reads MGRRSALALAVVSALLC. Residues 18–545 are Extracellular-facing; that stretch reads QVWSSGVFEL…MESQGGPFPW (528 aa). The 45-residue stretch at 176-220 folds into the DSL domain; it reads FVCDEHYYGEGCSVFCRPRDDAFGHFTCGDRGEKMCDPGWKGQYC. 27 disulfide bridges follow: Cys-178–Cys-187, Cys-191–Cys-203, Cys-211–Cys-220, Cys-225–Cys-236, Cys-229–Cys-242, Cys-244–Cys-253, Cys-256–Cys-267, Cys-262–Cys-273, Cys-275–Cys-284, Cys-291–Cys-303, Cys-297–Cys-313, Cys-315–Cys-324, Cys-331–Cys-342, Cys-336–Cys-351, Cys-353–Cys-362, Cys-369–Cys-380, Cys-374–Cys-390, Cys-392–Cys-401, Cys-408–Cys-419, Cys-413–Cys-428, Cys-430–Cys-439, Cys-446–Cys-457, Cys-451–Cys-466, Cys-468–Cys-477, Cys-484–Cys-495, Cys-489–Cys-504, and Cys-506–Cys-515. EGF-like domains follow at residues 225-253, 256-284, and 291-324; these read CLPG…GRYC, CIRY…GLFC, and CTHH…GANC. The region spanning 331 to 362 is the EGF-like 4; calcium-binding domain; that stretch reads CAPSPCKNGASCTDLEDSFSCTCPPGFYGKVC. EGF-like domains lie at 369–401 and 408–439; these read CADG…GFNC and CGSS…GRYC. The EGF-like 7; calcium-binding domain maps to 446 to 477; sequence CASSPCANGGTCRDSVNDFSCTCPPGYTGKNC. An N-linked (GlcNAc...) asparagine glycan is attached at Asn-476. The region spanning 484–515 is the EGF-like 8 domain; the sequence is CEHAPCHNGATCHQRGQRYMCECAQGYGGPNC. Residues 546–568 form a helical membrane-spanning segment; that stretch reads VAVCAGVVLVLLLLLGCAAVVVC. The Cytoplasmic portion of the chain corresponds to 569 to 722; the sequence is VRLKLQKHQP…KDECVIATEV (154 aa). A Glycyl lysine isopeptide (Lys-Gly) (interchain with G-Cter in ubiquitin) cross-link involves residue Lys-613. Thr-638 carries the phosphothreonine modification. Positions 655–664 are enriched in basic and acidic residues; the sequence is RDTHSKRDTK. The disordered stretch occupies residues 655-697; the sequence is RDTHSKRDTKCQSQSSAGEEKIAPTLRGGEIPDRKRPESVYST. Ser-693 is modified (phosphoserine; by PKB). A Phosphoserine modification is found at Ser-696. The tract at residues 719 to 722 is interaction with MAGI1; sequence ATEV.

Homodimer. Interacts with TJP1. Interacts with MMP14; inhibits DLL1-induced Notch signaling. Interacts with MAGI1 (via PDZ domain); forms a complex with CTNNB1 and CDH2 and promotes recruitment to the adherens junction and stabilization on the cell surface. Interacts with PSEN1; undergoes a presenilin-dependent gamma-secretase cleavage that releases a Dll1-intracellular form. Interacts with MFAP5. Interacts with MIB1. Interacts with NEURL1B; leads to ubiquitination. Interacts with NEURL1. Interacts with SYNJ2BP; enhances DLL1 protein stability, and promotes Notch signaling in endothelial cells. Interacts with MAGI1, MAGI2, MAGI3 and MPDZ. Interacts (via ubiquitin) with EPN1 (via IUM domain); binding with NOTCH1 attached to neighboring cell, promotes ligand ubiquitination and EPN1 interaction, leading to NECD transendocytosis and Notch signaling. Interacts with NOTCH1. Post-translationally, ubiquitinated by MIB (MIB1 or MIB2), leading to its endocytosis and subsequent degradation. Ubiquitinated; promotes recycling back to the plasma membrane and confers a strong affinity for NOTCH1. Multi-ubiquitination of Lys-613 by MIB1 promotes both cis and trans-interaction with NOTCH1, as well as activation of Notch signaling. Ubiquitinated by NEURL1B. Phosphorylated in a membrane association-dependent manner. Phosphorylation at Ser-696 requires the presence of Ser-693, whereas phosphorylation at Thr-638 and Ser-693 occurs independently of the other sites. Phosphorylation is required for full ligand activity in vitro and affects surface presentation, ectodomain shedding, and endocytosis. In terms of processing, cleaved by MMP14; negatively regulates DLL1-induced Notch signaling in HPCs, modulating B-lymphocyte differentiation in bone marrow. Undergoes two consecutive processing events: a shedding event, partially by ADAM10, that generates a soluble extracellular form and an intracellular membrane-anchored form, followed by a gamma-secretase cleavage releasing an intracellular fragment. Post-translationally, O-fucosylated. Can be elongated to a disaccharide by MFNG. As to expression, in the embryo, expressed in the paraxial mesoderm and nervous system. Expressed at high levels in adult heart and at lower levels, in adult lung. Highly expressed in satellite cells from masseter and tongue than in satellite cells from leg and extraocular muscle.?.

It localises to the apical cell membrane. The protein resides in the cell junction. It is found in the adherens junction. The protein localises to the membrane raft. Its subcellular location is the cell membrane. It localises to the nucleus. Functionally, transmembrane ligand protein of NOTCH1, NOTCH2 and NOTCH3 receptors that binds the extracellular domain (ECD) of Notch receptor in a cis and trans fashion manner. Following transinteraction, ligand cells produce mechanical force that depends of a clathrin-mediated endocytosis, requiring ligand ubiquitination, EPN1 interaction, and actin polymerisation; these events promote Notch receptor extracellular domain (NECD) transendocytosis and triggers Notch signaling through induction of cleavage, hyperphosphorylation, and nuclear accumulation of the intracellular domain of Notch receptors (NICD). Is required for embryonic development and maintenance of adult stem cells in many different tissues and immune systeme; the DLL1-induced Notch signaling is mediated through an intercellular communication that regulates cell lineage, cell specification, cell patterning and morphogenesis through effects on differentiation and proliferation. Plays a role in brain development at different level, namely by regulating neuronal differentiation of neural precursor cells via cell-cell interaction, most likely through the lateral inhibitory system in an endogenous level dependent-manner. During neocortex development, Dll1-Notch signaling transmission is mediated by dynamic interactions between intermediate neurogenic progenitors and radial glia; the cell-cell interactions are mediated via dynamic and transient elongation processes, likely to reactivate/maintain Notch activity in neighboring progenitors, and coordinate progenitor cell division and differentiation across radial and zonal boundaries. During cerebellar development, regulates Bergmann glial monolayer formation and its morphological maturation through a Notch signaling pathway. At the retina and spinal cord level, regulates neurogenesis by preventing the premature differentiation of neural progenitors and also by maintaining progenitors in spinal cord through Notch signaling pathway. Also controls neurogenesis of the neural tube in a progenitor domain-specific fashion along the dorsoventral axis. Maintains quiescence of neural stem cells and plays a role as a fate determinant that segregates asymmetrically to one daughter cell during neural stem cells mitosis, resulting in neuronal differentiation in Dll1-inheriting cell. Plays a role in immune systeme development, namely the development of all T-cells and marginal zone (MZ) B cells. Blocks the differentiation of progenitor cells into the B-cell lineage while promoting the emergence of a population of cells with the characteristics of a T-cell/NK-cell precursor. Upon MMP14 cleavage, negatively regulates Notch signaling in haematopoietic progenitor cells to specifically maintain normal B-cell development in bone marrow. Also plays a role during muscle development. During early development, inhibits myoblasts differentiation from the medial dermomyotomal lip and later regulates progenitor cell differentiation. Directly modulates cell adhesion and basal lamina formation in satellite cells through Notch signaling. Maintains myogenic progenitors pool by suppressing differentiation through down-regulation of MYOD1 and is required for satellite cell homing and PAX7 expression. During craniofacial and trunk myogenesis suppresses differentiation of cranial mesoderm-derived and somite-derived muscle via MYOD1 regulation but in cranial mesoderm-derived progenitors, is neither required for satellite cell homing nor for PAX7 expression. Also plays a role during pancreatic cell development. During type B pancreatic cell development, may be involved in the initiation of proximodistal patterning in the early pancreatic epithelium. Stimulates multipotent pancreatic progenitor cells proliferation and pancreatic growth by maintaining HES1 expression and PTF1A protein levels. During fetal stages of development, is required to maintain arterial identity and the responsiveness of arterial endothelial cells for VEGFA through regulation of KDR activation and NRP1 expression. Controls sprouting angiogenesis and subsequent vertical branch formation through regulation on tip cell differentiation. Negatively regulates goblet cell differentiation in intestine and controls secretory fat commitment through lateral inhibition in small intestine. Plays a role during inner ear development; negatively regulates auditory hair cell differentiation. Plays a role during nephron development through Notch signaling pathway. Regulates growth, blood pressure and energy homeostasis. The polypeptide is Delta-like protein 1 (Dll1) (Mus musculus (Mouse)).